The chain runs to 210 residues: MRCLTTPVLLRALAQAARAGPPGGRSLHSSAVAATYKYVNMQDPEMDMKSVTDRAARTLLWTELFRGLGMTLSYLFREPATINYPFEKGPLSPRFRGEHALRRYPSGEERCIACKLCEAICPAQAITIEAEPRADGSRRTTRYDIDMTKCIYCGFCQEACPVDAIVEGPNFEFSTETHEELLYNKEKLLNNGDKWEAEITANIQADYLYR.

Residues 1 to 34 (MRCLTTPVLLRALAQAARAGPPGGRSLHSSAVAA) constitute a mitochondrion transit peptide. 4Fe-4S ferredoxin-type domains follow at residues 102-131 (RRYP…IEAE) and 141-170 (TRYD…EGPN). [4Fe-4S] cluster is bound by residues cysteine 111, cysteine 114, cysteine 117, cysteine 121, cysteine 150, cysteine 153, cysteine 156, and cysteine 160.

This sequence belongs to the complex I 23 kDa subunit family. As to quaternary structure, core subunit of respiratory chain NADH dehydrogenase (Complex I) which is composed of 45 different subunits. This is a component of the iron-sulfur (IP) fragment of the enzyme. Interacts with RAB5IF. Requires [4Fe-4S] cluster as cofactor.

It is found in the mitochondrion inner membrane. The catalysed reaction is a ubiquinone + NADH + 5 H(+)(in) = a ubiquinol + NAD(+) + 4 H(+)(out). Its function is as follows. Core subunit of the mitochondrial membrane respiratory chain NADH dehydrogenase (Complex I) which catalyzes electron transfer from NADH through the respiratory chain, using ubiquinone as an electron acceptor. Essential for the catalytic activity and assembly of complex I. The polypeptide is NADH dehydrogenase [ubiquinone] iron-sulfur protein 8, mitochondrial (NDUFS8) (Gorilla gorilla gorilla (Western lowland gorilla)).